The sequence spans 994 residues: Sarcoplasmic/endoplasmic reticulum calcium ATPase 1 (994 aa).

At 1-48 (MENAHAKTAEECLAFFGVNESVGLSGEQVRRALEKYGHNELPAEEGKT) the chain is on the cytoplasmic side. A helical membrane pass occupies residues 49 to 69 (IWELVVEQFEDLLVRILLLAA). Residues 70–89 (CISFVLAWFEEGEETITAFV) are Lumenal-facing. Residues 90–110 (EPFVILLILIANAVVGVWQER) traverse the membrane as a helical segment. At 111 to 253 (NAENAIEALK…QDKTPLQQKL (143 aa)) the chain is on the cytoplasmic side. Residues 254-273 (DEFGEQLSKVISLICVAVWL) traverse the membrane as a helical segment. The Lumenal portion of the chain corresponds to 274–295 (INIGHFNDPVHGGSWIRGAIYY). A helical membrane pass occupies residues 296–313 (FKIAVALAVAAIPEGLPA). Val-304, Ala-305, Ile-307, and Glu-309 together coordinate Ca(2+). The Cytoplasmic portion of the chain corresponds to 314-757 (VITTCLALGT…EEGRAIYNNM (444 aa)). The active-site 4-aspartylphosphate intermediate is Asp-351. Positions 351 and 353 each coordinate Mg(2+). ATP is bound by residues Thr-353, Glu-442, Arg-489, Lys-515, Arg-560, Thr-625, Gly-626, Asp-627, Arg-678, and Lys-684. Asp-703 contacts Mg(2+). Asn-706 contributes to the ATP binding site. Residues 758 to 777 (KQFIRYLISSNVGEVVCIFL) form a helical membrane-spanning segment. 2 residues coordinate Ca(2+): Asn-768 and Glu-771. The Lumenal segment spans residues 778–787 (TAALGLPEAL). A helical transmembrane segment spans residues 788 to 808 (IPVQLLWVNLVTDGLPATALG). An interaction with PLN region spans residues 788 to 808 (IPVQLLWVNLVTDGLPATALG). The Ca(2+) site is built by Asn-796, Thr-799, and Asp-800. Residues 809–828 (FNPPDLDIMDKPPRSPKEPL) lie on the Cytoplasmic side of the membrane. The chain crosses the membrane as a helical span at residues 829–851 (ISGWLFFRYLAIGGYVGAATVGA). The Lumenal segment spans residues 852-897 (AAWWFLYAEDGPSLTYHQLTHFMQCTHHNAEFEGVDCDIFESPVPM). Cys-876 and Cys-888 are disulfide-bonded. The helical transmembrane segment at 898 to 917 (TMALSVLVTIEMCNALNSLS) threads the bilayer. Position 908 (Glu-908) interacts with Ca(2+). Over 918–930 (ENQSLLRMPPWVN) the chain is Cytoplasmic. A helical membrane pass occupies residues 931 to 949 (IWLVGSICLSMSLHFVILY). The interaction with PLN stretch occupies residues 932–943 (WLVGSICLSMSL). The Lumenal portion of the chain corresponds to 950-964 (VDPLPMIFKLTHLDL). The chain crosses the membrane as a helical span at residues 965-985 (AHWLVVLRISFPVILLDEALK). Residues 986–994 (FVARNYLEA) are Cytoplasmic-facing.

It belongs to the cation transport ATPase (P-type) (TC 3.A.3) family. Type IIA subfamily. As to quaternary structure, interacts with sarcolipin (SLN). Interacts with phospholamban (PLN). Interacts with myoregulin (MRLN). Interacts with DWORF. Mg(2+) serves as cofactor.

The protein localises to the endoplasmic reticulum membrane. It localises to the sarcoplasmic reticulum membrane. It carries out the reaction Ca(2+)(in) + ATP + H2O = Ca(2+)(out) + ADP + phosphate + H(+). Its activity is regulated as follows. Inhibited by sarcolipin (SLN) and myoregulin (MRLN). Also shown to be inhibited by phospholamban (PLN) in vitro. Enhanced by DWORF; DWORF increases activity by displacing sarcolipin (SLN), phospholamban (PLN) and myoregulin (MRLN). Its function is as follows. Key regulator of striated muscle performance by acting as the major Ca(2+) ATPase responsible for the reuptake of cytosolic Ca(2+) into the sarcoplasmic reticulum. Catalyzes the hydrolysis of ATP coupled with the translocation of calcium from the cytosol to the sarcoplasmic reticulum lumen. Contributes to calcium sequestration involved in muscular excitation/contraction. The sequence is that of Sarcoplasmic/endoplasmic reticulum calcium ATPase 1 (ATP2A1) from Gallus gallus (Chicken).